The sequence spans 306 residues: uncharacterized protein (306 aa).

The protein to L.delbrueckii similar ORF in glnA 5'region.

This is an uncharacterized protein from Lactobacillus delbrueckii subsp. bulgaricus.